A 228-amino-acid polypeptide reads, in one-letter code: ATP phosphoribosyltransferase (228 aa).

The protein belongs to the ATP phosphoribosyltransferase family. Short subfamily. Heteromultimer composed of HisG and HisZ subunits.

The protein resides in the cytoplasm. It catalyses the reaction 1-(5-phospho-beta-D-ribosyl)-ATP + diphosphate = 5-phospho-alpha-D-ribose 1-diphosphate + ATP. It participates in amino-acid biosynthesis; L-histidine biosynthesis; L-histidine from 5-phospho-alpha-D-ribose 1-diphosphate: step 1/9. Its function is as follows. Catalyzes the condensation of ATP and 5-phosphoribose 1-diphosphate to form N'-(5'-phosphoribosyl)-ATP (PR-ATP). Has a crucial role in the pathway because the rate of histidine biosynthesis seems to be controlled primarily by regulation of HisG enzymatic activity. This is ATP phosphoribosyltransferase from Moorella thermoacetica (strain ATCC 39073 / JCM 9320).